Here is a 736-residue protein sequence, read N- to C-terminus: Ethylene receptor 2 (736 aa).

3 helical membrane passes run 22–42 (ISDFFIAVAYFSIPIELVYFV), 53–73 (VLVQFGAFIVLCGATHLINLW), and 94–114 (AAVSCATAVMLVHIIPDLLSV). Cu cation contacts are provided by C64 and H68. The 149-residue stretch at 157–305 (DRHTILKTTL…VVADQVAVAL (149 aa)) folds into the GAF domain. The 238-residue stretch at 348 to 585 (VMNHEMRTPM…TAIFIVKLGI (238 aa)) folds into the Histidine kinase domain. H351 carries the post-translational modification Phosphohistidine; by autocatalysis. The 118-residue stretch at 613–730 (KVLVMDDNGF…KMRSVLSGLL (118 aa)) folds into the Response regulatory domain. D661 is subject to 4-aspartylphosphate.

Belongs to the ethylene receptor family. In terms of assembly, homodimer; disulfide-linked. Cu cation is required as a cofactor. Post-translationally, activation probably requires a transfer of a phosphate group between a His in the transmitter domain and an Asp of the receiver domain. In terms of tissue distribution, leaves, flowers and fruits.

The protein localises to the endoplasmic reticulum membrane. It catalyses the reaction ATP + protein L-histidine = ADP + protein N-phospho-L-histidine.. May act early in the ethylene signal transduction pathway, possibly as an ethylene receptor, or as a regulator of the pathway. The sequence is that of Ethylene receptor 2 (ETR2) from Solanum lycopersicum (Tomato).